The sequence spans 395 residues: NKAP-like protein (395 aa).

Disordered stretches follow at residues 1-77 and 91-247; these read MSPV…RPLP and CGGY…ISCK. Phosphoserine occurs at positions 23 and 25. Residues 25 to 35 show a composition bias toward polar residues; it reads SPPSALQTSRS. The span at 109–130 shows a compositional bias: basic and acidic residues; the sequence is DQEKEKEESYRQRRLKERERIG. Residue S149 is modified to Phosphoserine. A compositionally biased stretch (basic and acidic residues) spans 150-161; that stretch reads DEHTPAEDEVKN. 2 stretches are compositionally biased toward basic residues: residues 177–197 and 214–238; these read KTSH…KHKK and KKVK…KRTK.

Belongs to the NKAP family. As to quaternary structure, interacts with RBPJ, CIR1 and HDAC3. Specific to testis (at protein level). Detected in differenting spermatogonia and early spermatocytes (at protein level).

The protein localises to the nucleus. Functionally, transcriptional repressor of Notch-mediated signaling. Required for spermatogenesis. The chain is NKAP-like protein from Mus musculus (Mouse).